The following is a 313-amino-acid chain: Ornithine carbamoyltransferase (313 aa).

Carbamoyl phosphate is bound by residues 57–60, Q84, R108, and 135–138; these read STRT and HPCQ. L-ornithine is bound by residues N166, D230, and 234-235; that span reads SM. Residues 270-271 and R298 contribute to the carbamoyl phosphate site; that span reads CL.

The protein belongs to the aspartate/ornithine carbamoyltransferase superfamily. OTCase family. Homohexamer.

The protein resides in the cytoplasm. The enzyme catalyses carbamoyl phosphate + L-ornithine = L-citrulline + phosphate + H(+). It participates in amino-acid biosynthesis; L-arginine biosynthesis; L-arginine from L-ornithine and carbamoyl phosphate: step 1/3. Its function is as follows. Reversibly catalyzes the transfer of the carbamoyl group from carbamoyl phosphate (CP) to the N(epsilon) atom of ornithine (ORN) to produce L-citrulline. In Gloeobacter violaceus (strain ATCC 29082 / PCC 7421), this protein is Ornithine carbamoyltransferase.